The sequence spans 446 residues: Phosphoglucosamine mutase (446 aa).

Residue Ser102 is the Phosphoserine intermediate of the active site. Positions 102, 241, 243, and 245 each coordinate Mg(2+). Ser102 carries the post-translational modification Phosphoserine.

The protein belongs to the phosphohexose mutase family. The cofactor is Mg(2+). In terms of processing, activated by phosphorylation.

It carries out the reaction alpha-D-glucosamine 1-phosphate = D-glucosamine 6-phosphate. Its function is as follows. Catalyzes the conversion of glucosamine-6-phosphate to glucosamine-1-phosphate. In Xylella fastidiosa (strain M23), this protein is Phosphoglucosamine mutase.